We begin with the raw amino-acid sequence, 344 residues long: 4-dimethylallyltryptophan N-methyltransferase easF (344 aa).

This sequence belongs to the methyltransferase superfamily. As to quaternary structure, homodimer.

It catalyses the reaction 4-(3-methylbut-2-enyl)-L-tryptophan + S-adenosyl-L-methionine = 4-(3-methylbut-2-enyl)-L-abrine + S-adenosyl-L-homocysteine + H(+). The protein operates within alkaloid biosynthesis; ergot alkaloid biosynthesis. Its function is as follows. 4-dimethylallyltryptophan N-methyltransferase; part of the gene cluster that mediates the biosynthesis of fungal ergot alkaloid ergovaline, the predominant ergopeptine product in E.festucae var. lolii. DmaW catalyzes the first step of ergot alkaloid biosynthesis by condensing dimethylallyl diphosphate (DMAP) and tryptophan to form 4-dimethylallyl-L-tryptophan. The second step is catalyzed by the methyltransferase easF that methylates 4-dimethylallyl-L-tryptophan in the presence of S-adenosyl-L-methionine, resulting in the formation of 4-dimethylallyl-L-abrine. The catalase easC and the FAD-dependent oxidoreductase easE then transform 4-dimethylallyl-L-abrine to chanoclavine-I which is further oxidized by easD in the presence of NAD(+), resulting in the formation of chanoclavine-I aldehyde. Agroclavine dehydrogenase easG then mediates the conversion of chanoclavine-I aldehyde to agroclavine via a non-enzymatic adduct reaction: the substrate is an iminium intermediate that is formed spontaneously from chanoclavine-I aldehyde in the presence of glutathione. The presence of easA is not required to complete this reaction. Further conversion of agroclavine to paspalic acid is a two-step process involving oxidation of agroclavine to elymoclavine and of elymoclavine to paspalic acid, the second step being performed by the elymoclavine oxidase cloA. Paspalic acid is then further converted to D-lysergic acid. Ergovaline is assembled from D-lysergic acid and three different amino acids by the D-lysergyl-peptide-synthetase composed of a monomudular (lpsB) and a trimodular (lpsA) nonribosomal peptide synthetase subunit. This chain is 4-dimethylallyltryptophan N-methyltransferase easF, found in Epichloe festucae var. lolii (Neotyphodium lolii).